We begin with the raw amino-acid sequence, 571 residues long: MRVSKYLLSTQKETPANAEVISHQLMLRAGMIRRNASGLYSYLPTGLRVLRKVEAIVREEMNKAGAIEILMPMVQPADLWVETGRWEKFGPELLRFKDRHNRDFVLGPTHEEVITDLIRKEVSSYKQLPLNLYQIQTKFRDEVRPRFGMMRSREFLMKDAYSFHLDVDTMNETYEAMYNAYSNILTRMGLAFRPVLADTGSIGGSMSHEFHVLAQSGEDLIAYSTGSDYAANIEKAESPVPTEPRGAATEELCLVDTPNAKTIAELVEQFDLDITKTVKTLIVVGASEATPLVALIVRGDHELNEVKADKLDLVASPVEMAPEALIRDAIGAGPGSLGPIGLNIPIVIDHSVSVMSDFAAGANVDDKHYFGINWERDLPLAQVADIRNVVEGEPTPDGSGIYAMARGIEVGHIFQLGTNYSKSMNATVLDENGKSQVLLMGCYGVGVSRIVAAAIEQNFDDRGIIWPEAIAPFSVGILPMNMHKSHRVTDIAEQLYKDLNEAGIDVLLDDRKERPGVMFADMELIGIPHTVVIGDRNIDAGVFEYKNRRTGEKQDIPFDQLLDFLKNAVKG.

This sequence belongs to the class-II aminoacyl-tRNA synthetase family. ProS type 1 subfamily. In terms of assembly, homodimer.

It localises to the cytoplasm. It catalyses the reaction tRNA(Pro) + L-proline + ATP = L-prolyl-tRNA(Pro) + AMP + diphosphate. Its function is as follows. Catalyzes the attachment of proline to tRNA(Pro) in a two-step reaction: proline is first activated by ATP to form Pro-AMP and then transferred to the acceptor end of tRNA(Pro). As ProRS can inadvertently accommodate and process non-cognate amino acids such as alanine and cysteine, to avoid such errors it has two additional distinct editing activities against alanine. One activity is designated as 'pretransfer' editing and involves the tRNA(Pro)-independent hydrolysis of activated Ala-AMP. The other activity is designated 'posttransfer' editing and involves deacylation of mischarged Ala-tRNA(Pro). The misacylated Cys-tRNA(Pro) is not edited by ProRS. The sequence is that of Proline--tRNA ligase from Shewanella baltica (strain OS195).